A 348-amino-acid polypeptide reads, in one-letter code: Small ribosomal subunit biogenesis GTPase RsgA (348 aa).

Residues 72 to 230 (RNQLSRPAIA…IADTPGFNQP (159 aa)) form the CP-type G domain. Residues 121 to 124 (TKAD) and 172 to 180 (GPSGVGKSS) each bind GTP. Zn(2+) is bound by residues Cys-255, Cys-260, His-262, and Cys-268. The span at 305-322 (AKSDRQGQQRLEPLLDAK) shows a compositional bias: basic and acidic residues. The disordered stretch occupies residues 305–348 (AKSDRQGQQRLEPLLDAKKYRRRSRRQQHQHVNPMAEEVLDSEW). The span at 323 to 333 (KYRRRSRRQQH) shows a compositional bias: basic residues.

The protein belongs to the TRAFAC class YlqF/YawG GTPase family. RsgA subfamily. As to quaternary structure, monomer. Associates with 30S ribosomal subunit, binds 16S rRNA. Zn(2+) serves as cofactor.

Its subcellular location is the cytoplasm. Functionally, one of several proteins that assist in the late maturation steps of the functional core of the 30S ribosomal subunit. Helps release RbfA from mature subunits. May play a role in the assembly of ribosomal proteins into the subunit. Circularly permuted GTPase that catalyzes slow GTP hydrolysis, GTPase activity is stimulated by the 30S ribosomal subunit. This chain is Small ribosomal subunit biogenesis GTPase RsgA, found in Thermosynechococcus vestitus (strain NIES-2133 / IAM M-273 / BP-1).